A 52-amino-acid chain; its full sequence is MAVPKKRTSISKKRIRKNIWKKKGYWAALKAFSLGKSLSTRNSKSFFYPTNK.

This sequence belongs to the bacterial ribosomal protein bL32 family.

The protein resides in the plastid. The protein localises to the chloroplast. The chain is Large ribosomal subunit protein bL32c from Morus indica (Mulberry).